We begin with the raw amino-acid sequence, 88 residues long: HssA/B-like protein 12 (88 aa).

This sequence belongs to the hssA/B family.

The polypeptide is HssA/B-like protein 12 (hssl12) (Dictyostelium discoideum (Social amoeba)).